A 176-amino-acid polypeptide reads, in one-letter code: Ribosome maturation factor RimM (176 aa).

In terms of domain architecture, PRC barrel spans 100-173 (EGEFHLLDLV…WLRLTPPPGL (74 aa)).

This sequence belongs to the RimM family. Binds ribosomal protein uS19.

The protein localises to the cytoplasm. An accessory protein needed during the final step in the assembly of 30S ribosomal subunit, possibly for assembly of the head region. Essential for efficient processing of 16S rRNA. May be needed both before and after RbfA during the maturation of 16S rRNA. It has affinity for free ribosomal 30S subunits but not for 70S ribosomes. The sequence is that of Ribosome maturation factor RimM from Prochlorococcus marinus (strain MIT 9313).